The sequence spans 1166 residues: IQ domain-containing protein N (1166 aa).

The span at 1–19 shows a compositional bias: polar residues; the sequence is MQPATQLQFTNHLSPNGQC. The tract at residues 1-56 is disordered; sequence MQPATQLQFTNHLSPNGQCILQPPPTPSLPDKMEKAPPQPQHEGLKSEEHLPQQPA. The 30-residue stretch at 89–118 folds into the IQ 1 domain; it reads HARAATLIQANWRGYRLRQKLISQMTAAKA. 3 disordered regions span residues 431–450, 769–797, and 829–848; these read VCPG…VATP, LSAP…TTQG, and DSGA…PCQE. 5 IQ domains span residues 907–932, 928–955, 952–979, 1091–1119, and 1114–1143; these read AVTT…RRAT, HRRA…RATT, RATT…MLHP, RDKA…MAAK, and QQMA…LLGP. The segment at 1145 to 1166 is disordered; that stretch reads DPWSSSQHMHWASSQHTHWPGI. The segment covering 1147–1166 has biased composition (polar residues); that stretch reads WSSSQHMHWASSQHTHWPGI.

As to quaternary structure, interacts with calmodulin.

Essential for spermiogenesis and fertilization. May be required for manchette assembly in elongating spermatids. This is IQ domain-containing protein N (IQCN) from Macaca fascicularis (Crab-eating macaque).